We begin with the raw amino-acid sequence, 170 residues long: Peptide deformylase (170 aa).

Fe cation is bound by residues cysteine 94 and histidine 136. Residue glutamate 137 is part of the active site. Residue histidine 140 coordinates Fe cation.

It belongs to the polypeptide deformylase family. Fe(2+) is required as a cofactor.

It catalyses the reaction N-terminal N-formyl-L-methionyl-[peptide] + H2O = N-terminal L-methionyl-[peptide] + formate. In terms of biological role, removes the formyl group from the N-terminal Met of newly synthesized proteins. Requires at least a dipeptide for an efficient rate of reaction. N-terminal L-methionine is a prerequisite for activity but the enzyme has broad specificity at other positions. The polypeptide is Peptide deformylase (Xylella fastidiosa (strain 9a5c)).